We begin with the raw amino-acid sequence, 432 residues long: Transcriptional adapter 3-B (432 aa).

2 disordered regions span residues histidine 90–arginine 124 and serine 275–glutamate 315. The segment covering aspartate 293–proline 305 has biased composition (polar residues). A coiled-coil region spans residues alanine 335–isoleucine 398.

This sequence belongs to the NGG1 family.

It localises to the nucleus. Its function is as follows. Functions as a component of the PCAF complex. The PCAF complex is capable of efficiently acetylating histones in a nucleosomal context. The protein is Transcriptional adapter 3-B (tada3-b) of Xenopus laevis (African clawed frog).